We begin with the raw amino-acid sequence, 292 residues long: Transcription factor-like protein DPA (292 aa).

Residues 1–25 (MSMEMELFVTPEKQRQHPSVSVEKT) form a disordered region. A DNA-binding region spans residues 51 to 135 (GGGLRQFSVM…KKEIRWKGLP (85 aa)). The DEF box motif lies at 101 to 135 (NEKNIRRRVYDALNVFMALDIIARDKKEIRWKGLP). A coiled-coil region spans residues 163 to 184 (LKELREKVSSLESLMSRNQEMV). The tract at residues 246 to 280 (QEQNRVSSSSSTHHQSQHSSAHSSSSSCIASGTSG) is disordered. Positions 252–280 (SSSSSTHHQSQHSSAHSSSSSCIASGTSG) are enriched in low complexity.

It belongs to the E2F/DP family. Heterodimer with E2F. Interacts preferentially with E2FA and E2FB, but also with E2FC. Strongly expressed in the actively dividing tissues of the shoot apical meristem, young leaf primordia, the vascular tissues of the maturing leaf primordia and axillary buds.

It localises to the cytoplasm. It is found in the nucleus. Its function is as follows. Involved in the regulation of the G1/S transition. Increases the DNA binding and the transactivation activities of E2F proteins after heterodimerization. The complex DPA/E2FA promotes cell division and acts as a regulator of the endocycle. Positively regulates the activity of S phase-specific genes. In Arabidopsis thaliana (Mouse-ear cress), this protein is Transcription factor-like protein DPA (DPA).